Reading from the N-terminus, the 281-residue chain is Formamidopyrimidine-DNA glycosylase (281 aa).

Pro2 functions as the Schiff-base intermediate with DNA in the catalytic mechanism. Glu3 acts as the Proton donor in catalysis. The active-site Proton donor; for beta-elimination activity is the Lys58. The DNA site is built by His100, Arg119, and Arg160. An FPG-type zinc finger spans residues 245 to 281 (RVYGREGAPCPTPGCTGTVQRIVQSGRSSFFCPLCQQ). Residue Arg271 is the Proton donor; for delta-elimination activity of the active site.

This sequence belongs to the FPG family. As to quaternary structure, monomer. It depends on Zn(2+) as a cofactor.

The enzyme catalyses Hydrolysis of DNA containing ring-opened 7-methylguanine residues, releasing 2,6-diamino-4-hydroxy-5-(N-methyl)formamidopyrimidine.. It carries out the reaction 2'-deoxyribonucleotide-(2'-deoxyribose 5'-phosphate)-2'-deoxyribonucleotide-DNA = a 3'-end 2'-deoxyribonucleotide-(2,3-dehydro-2,3-deoxyribose 5'-phosphate)-DNA + a 5'-end 5'-phospho-2'-deoxyribonucleoside-DNA + H(+). Involved in base excision repair of DNA damaged by oxidation or by mutagenic agents. Acts as a DNA glycosylase that recognizes and removes damaged bases. Has a preference for oxidized purines, such as 7,8-dihydro-8-oxoguanine (8-oxoG). Has AP (apurinic/apyrimidinic) lyase activity and introduces nicks in the DNA strand. Cleaves the DNA backbone by beta-delta elimination to generate a single-strand break at the site of the removed base with both 3'- and 5'-phosphates. The protein is Formamidopyrimidine-DNA glycosylase of Paracoccus denitrificans (strain Pd 1222).